The sequence spans 333 residues: Phosphate acyltransferase (333 aa).

The protein belongs to the PlsX family. In terms of assembly, homodimer. Probably interacts with PlsY.

Its subcellular location is the cytoplasm. The catalysed reaction is a fatty acyl-[ACP] + phosphate = an acyl phosphate + holo-[ACP]. It participates in lipid metabolism; phospholipid metabolism. Catalyzes the reversible formation of acyl-phosphate (acyl-PO(4)) from acyl-[acyl-carrier-protein] (acyl-ACP). This enzyme utilizes acyl-ACP as fatty acyl donor, but not acyl-CoA. The sequence is that of Phosphate acyltransferase from Clostridium botulinum (strain Alaska E43 / Type E3).